The sequence spans 507 residues: L-amino-acid oxidase (507 aa).

Residues 1 to 19 form the signal peptide; the sequence is MNVLFIFSLLFLAALESCA. An intrachain disulfide couples cysteine 29 to cysteine 192. Residues 62–63, 82–83, arginine 90, and 106–109 each bind FAD; these read MA, EA, and GPMR. Arginine 109 contacts substrate. Residues asparagine 191 and asparagine 213 are each glycosylated (N-linked (GlcNAc...) asparagine). Valine 280 contributes to the FAD binding site. Cysteine 348 and cysteine 429 are oxidised to a cystine. An N-linked (GlcNAc...) asparagine glycan is attached at asparagine 378. Tyrosine 389 is a binding site for substrate. FAD-binding positions include glutamate 473 and 480–485; that span reads GWIDST.

Belongs to the flavin monoamine oxidase family. FIG1 subfamily. In terms of assembly, homodimer; non-covalently linked. The cofactor is FAD. In terms of tissue distribution, expressed by the venom gland.

Its subcellular location is the secreted. It catalyses the reaction an L-alpha-amino acid + O2 + H2O = a 2-oxocarboxylate + H2O2 + NH4(+). The catalysed reaction is L-leucine + O2 + H2O = 4-methyl-2-oxopentanoate + H2O2 + NH4(+). Functionally, catalyzes an oxidative deamination of predominantly hydrophobic and aromatic L-amino acids, thus producing hydrogen peroxide that may contribute to the diverse toxic effects of this enzyme. Shows activity on L-Leu. Exhibits diverse biological activities, such as hemorrhage, hemolysis, edema, apoptosis of vascular endothelial cells or tumor cell lines, antibacterial and antiparasitic activities. This protein induces platelet aggregation by both hydrogen peroxide production and binding to platelet membrane proteins (that would enhance the sensitivity of platelets to hydrogen peroxide). Effects of snake L-amino oxidases on platelets are controversial, since they either induce aggregation or inhibit agonist-induced aggregation. These different effects are probably due to different experimental conditions. In Naja atra (Chinese cobra), this protein is L-amino-acid oxidase.